The chain runs to 1023 residues: Rho GTPase-activating protein 11A (1023 aa).

Positions 49 to 239 constitute a Rho-GAP domain; it reads VPFNALPHSA…TLIDYASDIG (191 aa). The residue at position 285 (S285) is a Phosphoserine. The residue at position 306 (T306) is a Phosphothreonine. Phosphoserine is present on residues S316 and S318. Position 323 is a phosphothreonine (T323). 3 positions are modified to phosphoserine: S339, S340, and S484. Residue T508 is modified to Phosphothreonine. The tract at residues 567–589 is disordered; sequence TPSNLNNKHNSNITSSPLSGDEN. Phosphoserine occurs at positions 582, 585, 638, and 675. The disordered stretch occupies residues 714 to 734; that stretch reads KQEFSSDEEIKKQQSPKDKLN. The segment covering 721 to 734 has biased composition (basic and acidic residues); sequence EEIKKQQSPKDKLN. S847 is subject to Phosphoserine. The residue at position 866 (T866) is a Phosphothreonine. S868 is modified (phosphoserine). The interval 999 to 1023 is disordered; the sequence is AWYKGSPKHPIGKTQLLPTSKPVDL.

The protein localises to the nucleus. In terms of biological role, GTPase activator for the Rho-type GTPases by converting them to an inactive GDP-bound state. The sequence is that of Rho GTPase-activating protein 11A from Homo sapiens (Human).